Here is a 418-residue protein sequence, read N- to C-terminus: Gamma-glutamyl phosphate reductase (418 aa).

This sequence belongs to the gamma-glutamyl phosphate reductase family.

The protein resides in the cytoplasm. The catalysed reaction is L-glutamate 5-semialdehyde + phosphate + NADP(+) = L-glutamyl 5-phosphate + NADPH + H(+). Its pathway is amino-acid biosynthesis; L-proline biosynthesis; L-glutamate 5-semialdehyde from L-glutamate: step 2/2. Functionally, catalyzes the NADPH-dependent reduction of L-glutamate 5-phosphate into L-glutamate 5-semialdehyde and phosphate. The product spontaneously undergoes cyclization to form 1-pyrroline-5-carboxylate. This Nitrosococcus oceani (strain ATCC 19707 / BCRC 17464 / JCM 30415 / NCIMB 11848 / C-107) protein is Gamma-glutamyl phosphate reductase.